A 436-amino-acid chain; its full sequence is uncharacterized protein (436 aa).

A helical membrane pass occupies residues 1-21; sequence MILLQVICTIWTCLFIPLLNA. BNR repeat units lie at residues 57–68 and 101–112; these read WISSDSGENWEA and YVTDDRGKSWRA. N-linked (GlcNAc...) asparagine glycosylation occurs at Asn-157. BNR repeat units lie at residues 229-240 and 394-405; these read ALSTDGGKTFKK and KISVDNGLTWSN.

It localises to the membrane. This is an uncharacterized protein from Saccharomyces cerevisiae (strain ATCC 204508 / S288c) (Baker's yeast).